Consider the following 429-residue polypeptide: Protein ORF66 (429 aa).

Belongs to the herpesviridae UL49 family. As to quaternary structure, interacts with ORF34.

The protein resides in the host nucleus. Its subcellular location is the host cytoplasm. In terms of biological role, participates in the expression of late viral mRNAs. The chain is Protein ORF66 (ORF66) from Homo sapiens (Human).